A 423-amino-acid chain; its full sequence is Imidazolonepropionase (423 aa).

His78 and His80 together coordinate Fe(3+). Zn(2+) is bound by residues His78 and His80. 4-imidazolone-5-propanoate-binding residues include Arg87, Tyr150, and His183. Tyr150 provides a ligand contact to N-formimidoyl-L-glutamate. His247 is a Fe(3+) binding site. Residue His247 participates in Zn(2+) binding. Glu250 provides a ligand contact to 4-imidazolone-5-propanoate. Asp322 is a Fe(3+) binding site. Zn(2+) is bound at residue Asp322. N-formimidoyl-L-glutamate-binding residues include Asn324 and Gly326. Ser327 contributes to the 4-imidazolone-5-propanoate binding site.

It belongs to the metallo-dependent hydrolases superfamily. HutI family. Zn(2+) is required as a cofactor. Fe(3+) serves as cofactor.

The protein resides in the cytoplasm. The enzyme catalyses 4-imidazolone-5-propanoate + H2O = N-formimidoyl-L-glutamate. Its pathway is amino-acid degradation; L-histidine degradation into L-glutamate; N-formimidoyl-L-glutamate from L-histidine: step 3/3. Its function is as follows. Catalyzes the hydrolytic cleavage of the carbon-nitrogen bond in imidazolone-5-propanoate to yield N-formimidoyl-L-glutamate. It is the third step in the universal histidine degradation pathway. This chain is Imidazolonepropionase, found in Bacillus cereus (strain ZK / E33L).